Reading from the N-terminus, the 682-residue chain is Methionine--tRNA ligase (682 aa).

Residues 14 to 24 (PYANGPVHLGH) carry the 'HIGH' region motif. Residues C145, C148, C158, and C161 each coordinate Zn(2+). A 'KMSKS' region motif is present at residues 331–335 (KMSKS). K334 is a binding site for ATP. The tRNA-binding domain maps to 580-682 (AFAAVDLRVA…SGAKPGQRIK (103 aa)).

The protein belongs to the class-I aminoacyl-tRNA synthetase family. MetG type 1 subfamily. As to quaternary structure, homodimer. Zn(2+) serves as cofactor.

It is found in the cytoplasm. It carries out the reaction tRNA(Met) + L-methionine + ATP = L-methionyl-tRNA(Met) + AMP + diphosphate. Is required not only for elongation of protein synthesis but also for the initiation of all mRNA translation through initiator tRNA(fMet) aminoacylation. The sequence is that of Methionine--tRNA ligase from Pseudomonas syringae pv. tomato (strain ATCC BAA-871 / DC3000).